Here is a 585-residue protein sequence, read N- to C-terminus: Formate--tetrahydrofolate ligase (585 aa).

65–72 serves as a coordination point for ATP; it reads TPHGEGKT.

This sequence belongs to the formate--tetrahydrofolate ligase family.

It catalyses the reaction (6S)-5,6,7,8-tetrahydrofolate + formate + ATP = (6R)-10-formyltetrahydrofolate + ADP + phosphate. It functions in the pathway one-carbon metabolism; tetrahydrofolate interconversion. The polypeptide is Formate--tetrahydrofolate ligase (Shewanella baltica (strain OS155 / ATCC BAA-1091)).